Here is a 147-residue protein sequence, read N- to C-terminus: 3-dehydroquinate dehydratase (147 aa).

The active-site Proton acceptor is the tyrosine 23. Residues asparagine 74, histidine 80, and aspartate 87 each coordinate substrate. Histidine 100 acts as the Proton donor in catalysis. Residues 101-102 (LS) and arginine 111 contribute to the substrate site.

Belongs to the type-II 3-dehydroquinase family. As to quaternary structure, homododecamer.

The catalysed reaction is 3-dehydroquinate = 3-dehydroshikimate + H2O. It functions in the pathway metabolic intermediate biosynthesis; chorismate biosynthesis; chorismate from D-erythrose 4-phosphate and phosphoenolpyruvate: step 3/7. Catalyzes a trans-dehydration via an enolate intermediate. The polypeptide is 3-dehydroquinate dehydratase (Clostridium botulinum (strain Kyoto / Type A2)).